The sequence spans 317 residues: Nitrilase (317 aa).

The 276-residue stretch at 5 to 280 folds into the CN hydrolase domain; the sequence is VKVAVVQAEP…DGVIISELDM (276 aa). Catalysis depends on E45, which acts as the Proton acceptor. K125 is a catalytic residue. The active-site Nucleophile is the C165.

This sequence belongs to the carbon-nitrogen hydrolase superfamily. Nitrilase family.

The enzyme catalyses a nitrile + 2 H2O = a carboxylate + NH4(+). Nitrilase that hydrolyzes preferentially 4-cyanopyridine. Is also able to hydrolyze some aliphatic nitriles, such as phenylacetonitrile. This is Nitrilase from Meyerozyma guilliermondii (strain ATCC 6260 / CBS 566 / DSM 6381 / JCM 1539 / NBRC 10279 / NRRL Y-324) (Yeast).